Here is a 583-residue protein sequence, read N- to C-terminus: Proline--tRNA ligase (583 aa).

This sequence belongs to the class-II aminoacyl-tRNA synthetase family. ProS type 1 subfamily. Homodimer.

Its subcellular location is the cytoplasm. It carries out the reaction tRNA(Pro) + L-proline + ATP = L-prolyl-tRNA(Pro) + AMP + diphosphate. In terms of biological role, catalyzes the attachment of proline to tRNA(Pro) in a two-step reaction: proline is first activated by ATP to form Pro-AMP and then transferred to the acceptor end of tRNA(Pro). As ProRS can inadvertently accommodate and process non-cognate amino acids such as alanine and cysteine, to avoid such errors it has two additional distinct editing activities against alanine. One activity is designated as 'pretransfer' editing and involves the tRNA(Pro)-independent hydrolysis of activated Ala-AMP. The other activity is designated 'posttransfer' editing and involves deacylation of mischarged Ala-tRNA(Pro). The misacylated Cys-tRNA(Pro) is not edited by ProRS. The sequence is that of Proline--tRNA ligase from Methylococcus capsulatus (strain ATCC 33009 / NCIMB 11132 / Bath).